We begin with the raw amino-acid sequence, 418 residues long: Deubiquitinase and deneddylase Dub1 (418 aa).

The segment covering 1 to 10 has biased composition (polar residues); that stretch reads MLSPTNSISK. The interval 1–23 is disordered; it reads MLSPTNSISKTVPAPPQDSSKPV. Residues 40 to 60 form a helical membrane-spanning segment; it reads TALAVLLVVVTLGLILLFYSF. Positions 75-145 are disordered; it reads STKEHPTISI…LPPKAPKPVK (71 aa). A compositionally biased stretch (pro residues) spans 86–141; the sequence is EPLPSPPLAVPRPSTPPPPVISRPSTPPAPTPAISPPSTPSAPKPSTPPPLPPKAP. Catalysis depends on residues histidine 288, aspartate 305, and cysteine 358.

This sequence belongs to the peptidase C48 family.

Its subcellular location is the secreted. The protein localises to the host cell. The protein resides in the membrane. In terms of biological role, effector proteins function to alter host cell physiology and promote bacterial survival in host tissues. This protease possesses deubiquitinating and deneddylating activities. The polypeptide is Deubiquitinase and deneddylase Dub1 (cdu1) (Chlamydia trachomatis serovar A (strain ATCC VR-571B / DSM 19440 / HAR-13)).